Here is a 1301-residue protein sequence, read N- to C-terminus: Dentin sialophosphoprotein (1301 aa).

The first 15 residues, 1-15 (MKIITYFCIWAVAWA), serve as a signal peptide directing secretion. Residues asparagine 41 and asparagine 49 are each glycosylated (N-linked (GlcNAc...) asparagine). The interval 55–89 (KESGVLVHEGDRGRQENTQDGHKGEGNGSKWAEVG) is disordered. Basic and acidic residues predominate over residues 62–79 (HEGDRGRQENTQDGHKGE). N-linked (GlcNAc...) asparagine glycans are attached at residues asparagine 81, asparagine 130, asparagine 150, asparagine 190, asparagine 191, asparagine 209, and asparagine 222. Polar residues predominate over residues 146–165 (AGATNRSNTNGNTDKNTQNG). The segment at 146 to 171 (AGATNRSNTNGNTDKNTQNGDVGDAG) is disordered. The segment at 202–1301 (NSCRNEGNTS…SDSNHSTSDD (1100 aa)) is disordered. Residues 203-221 (SCRNEGNTSEITPQINSKR) are compositionally biased toward polar residues. The segment covering 251–267 (ADEDEDEGSGDDEDEEA) has biased composition (acidic residues). A Phosphoserine; by CK1 modification is found at serine 259. Positions 271-280 (KDSSNNSKGQ) are enriched in polar residues. Residue asparagine 275 is glycosylated (N-linked (GlcNAc...) asparagine). 2 stretches are compositionally biased toward basic and acidic residues: residues 281–293 (EGQD…DHDS) and 300–327 (DSKE…KSEE). Position 301 is a phosphoserine (serine 301). An N-linked (GlcNAc...) asparagine glycan is attached at asparagine 336. The segment covering 340 to 377 (RIEDTQKLNHRESKRVENRITKESETHAVGKSQDKGIE) has biased composition (basic and acidic residues). A glycan (N-linked (GlcNAc...) asparagine) is linked at asparagine 387. Positions 388–404 (ITKEVGKGNEGKEDKGQ) are enriched in basic and acidic residues. 2 stretches are compositionally biased toward low complexity: residues 439–452 (SNTG…GYDS) and 462–487 (GDDP…NSSS). Positions 488 to 490 (RGD) match the Cell attachment site motif. Over residues 488 to 506 (RGDASYNSDESKDNGNGSD) the composition is skewed to polar residues. The span at 518-534 (TSDTNNSDSNGNGNNGN) shows a compositional bias: low complexity. Residues 536–549 (DNDKSDSGKGKSDS) show a composition bias toward basic and acidic residues. The segment covering 555-564 (SDSSNSSDSS) has biased composition (low complexity). Residues 581 to 595 (DSSDSDSSDSSDSDS) are compositionally biased toward acidic residues. Positions 596-619 (SDSSNSSDSSDSSDSSDSSDSSDS) are enriched in low complexity. Positions 620–642 (SDSKSDSSKSESDSSDSDSKSDS) are enriched in basic and acidic residues. Low complexity-rich tracts occupy residues 643 to 705 (SDSN…SDSS), 715 to 1264 (SSDS…STSD), 1272 to 1284 (QSKS…NGSD), and 1292 to 1301 (SDSNHSTSDD).

Interacts with FBLN7. DSP is glycosylated. Expressed in teeth. DPP is synthesized by odontoblast and transiently expressed by pre-ameloblasts.

It localises to the secreted. Its subcellular location is the extracellular space. It is found in the extracellular matrix. Its function is as follows. DSP may be an important factor in dentinogenesis. DPP may bind high amount of calcium and facilitate initial mineralization of dentin matrix collagen as well as regulate the size and shape of the crystals. The polypeptide is Dentin sialophosphoprotein (DSPP) (Homo sapiens (Human)).